A 166-amino-acid chain; its full sequence is PTS system glucose-specific EIIA component (166 aa).

The region spanning 34–138 (DPVFAQKMMG…SVISPIIITN (105 aa)) is the PTS EIIA type-1 domain. Residues His71 and His86 each coordinate Zn(2+). His86 serves as the catalytic Tele-phosphohistidine intermediate; for EIIA activity. The residue at position 86 (His86) is a Phosphohistidine; by HPr.

Heterodimer with glycerol kinase (glpk). Requires Zn(2+) as cofactor.

It localises to the cytoplasm. In terms of biological role, the phosphoenolpyruvate-dependent sugar phosphotransferase system (sugar PTS), a major carbohydrate active transport system, catalyzes the phosphorylation of incoming sugar substrates concomitantly with their translocation across the cell membrane. The enzyme II complex composed of PtsG and Crr is involved in glucose transport. This Staphylococcus aureus (strain MSSA476) protein is PTS system glucose-specific EIIA component (crr).